A 185-amino-acid polypeptide reads, in one-letter code: MKTAQELRTGNVVMIGADAMVVQKAEYNKSGRNSAVVKMKFKNLLTGAGMESVYKADDKFDVVVLERKEVTYSYFADPMYVFMDADYNQFEVEGEMMGDALHYLEDGMACEVVFYNEKAISVELPTTLVREIIYTEPAVKGDTSSGKVLKNAKLNTGFELQVPLFCNIGDKIEIDTRTHEYRSRA.

Belongs to the elongation factor P family.

It localises to the cytoplasm. It functions in the pathway protein biosynthesis; polypeptide chain elongation. Involved in peptide bond synthesis. Stimulates efficient translation and peptide-bond synthesis on native or reconstituted 70S ribosomes in vitro. Probably functions indirectly by altering the affinity of the ribosome for aminoacyl-tRNA, thus increasing their reactivity as acceptors for peptidyl transferase. The chain is Elongation factor P from Paraburkholderia phytofirmans (strain DSM 17436 / LMG 22146 / PsJN) (Burkholderia phytofirmans).